A 629-amino-acid polypeptide reads, in one-letter code: tRNA uridine 5-carboxymethylaminomethyl modification enzyme MnmG (629 aa).

Residues 13-18 (GGGHAG), V125, and S180 contribute to the FAD site. 273 to 287 (GPRYCPSIEDKVMRF) is a binding site for NAD(+). Q370 lines the FAD pocket.

Belongs to the MnmG family. Homodimer. Heterotetramer of two MnmE and two MnmG subunits. FAD serves as cofactor.

The protein resides in the cytoplasm. NAD-binding protein involved in the addition of a carboxymethylaminomethyl (cmnm) group at the wobble position (U34) of certain tRNAs, forming tRNA-cmnm(5)s(2)U34. The polypeptide is tRNA uridine 5-carboxymethylaminomethyl modification enzyme MnmG (Salmonella paratyphi A (strain ATCC 9150 / SARB42)).